The primary structure comprises 226 residues: 3-dehydroquinate dehydratase (226 aa).

3-dehydroquinate contacts are provided by residues 33–35 and Arg65; that span reads EWR. His121 acts as the Proton donor/acceptor in catalysis. Catalysis depends on Lys146, which acts as the Schiff-base intermediate with substrate. Positions 188, 207, and 211 each coordinate 3-dehydroquinate.

It belongs to the type-I 3-dehydroquinase family. Homodimer.

It carries out the reaction 3-dehydroquinate = 3-dehydroshikimate + H2O. Its pathway is metabolic intermediate biosynthesis; chorismate biosynthesis; chorismate from D-erythrose 4-phosphate and phosphoenolpyruvate: step 3/7. Functionally, involved in the third step of the chorismate pathway, which leads to the biosynthesis of aromatic amino acids. Catalyzes the cis-dehydration of 3-dehydroquinate (DHQ) and introduces the first double bond of the aromatic ring to yield 3-dehydroshikimate. In Lactococcus lactis subsp. lactis (strain IL1403) (Streptococcus lactis), this protein is 3-dehydroquinate dehydratase.